Here is a 385-residue protein sequence, read N- to C-terminus: Probable dual-specificity RNA methyltransferase RlmN (385 aa).

The tract at residues 1–24 is disordered; it reads MTATTAESGNLLPLVSGRSRPPRH. Glu114 functions as the Proton acceptor in the catalytic mechanism. In terms of domain architecture, Radical SAM core spans 120–364; the sequence is YPQRATVCVS…AATVRDTRGR (245 aa). Cys127 and Cys370 are oxidised to a cystine. [4Fe-4S] cluster is bound by residues Cys134, Cys138, and Cys141. S-adenosyl-L-methionine contacts are provided by residues 194–195, Ser228, 251–253, and Asn327; these read GE and SLH. Cys370 functions as the S-methylcysteine intermediate in the catalytic mechanism.

It belongs to the radical SAM superfamily. RlmN family. It depends on [4Fe-4S] cluster as a cofactor.

It is found in the cytoplasm. It carries out the reaction adenosine(2503) in 23S rRNA + 2 reduced [2Fe-2S]-[ferredoxin] + 2 S-adenosyl-L-methionine = 2-methyladenosine(2503) in 23S rRNA + 5'-deoxyadenosine + L-methionine + 2 oxidized [2Fe-2S]-[ferredoxin] + S-adenosyl-L-homocysteine. The catalysed reaction is adenosine(37) in tRNA + 2 reduced [2Fe-2S]-[ferredoxin] + 2 S-adenosyl-L-methionine = 2-methyladenosine(37) in tRNA + 5'-deoxyadenosine + L-methionine + 2 oxidized [2Fe-2S]-[ferredoxin] + S-adenosyl-L-homocysteine. Its function is as follows. Specifically methylates position 2 of adenine 2503 in 23S rRNA and position 2 of adenine 37 in tRNAs. This chain is Probable dual-specificity RNA methyltransferase RlmN, found in Parafrankia sp. (strain EAN1pec).